Here is a 102-residue protein sequence, read N- to C-terminus: Protein transport protein sec61 subunit beta (102 aa).

Positions 1–15 are enriched in polar residues; sequence MSSTKASGSVKNSAA. The interval 1-53 is disordered; it reads MSSTKASGSVKNSAASAPGGPKSQIRRRAAVEKNTKESNSGPAGARAAGAPGS. Topologically, residues 1–72 are cytoplasmic; sequence MSSTKASGSV…DEASGFKVDP (72 aa). A compositionally biased stretch (low complexity) spans 41–52; the sequence is GPAGARAAGAPG. A helical membrane pass occupies residues 73–93; the sequence is VVVMVLSVGFIASVFLLHIVA.

Belongs to the SEC61-beta family. Heterotrimeric complex composed of SEC61, SBH1 and SSS1.

It localises to the endoplasmic reticulum membrane. In terms of biological role, necessary for protein translocation in the endoplasmic reticulum. The polypeptide is Protein transport protein sec61 subunit beta (sbh1) (Schizosaccharomyces pombe (strain 972 / ATCC 24843) (Fission yeast)).